The chain runs to 496 residues: Probable serine/threonine-protein kinase DDB_G0284251 (496 aa).

Residues 1-13 (MIEINNNHNNGNG) show a composition bias toward low complexity. Positions 1 to 25 (MIEINNNHNNGNGKQFPSSQIMPDS) are disordered. The Protein kinase domain occupies 36-288 (YTLGEKIGRG…AQELLQHPIF (253 aa)). ATP is bound by residues 42-50 (IGRGAFGQV) and Lys-65. The active-site Proton acceptor is the Asp-158. The segment at 323–345 (DWGSSSSTSGSSTPLSSSSSSSN) is disordered. Residues 353-386 (EDFNKLQTTIKQQAQTISNLSEEILILKKELKEK) adopt a coiled-coil conformation. Residues 454 to 496 (PQLTPSSSRENISLSNSSSSIPNPNQNQNQNNKSKSKKFGFFS) are disordered. Positions 458–486 (PSSSRENISLSNSSSSIPNPNQNQNQNNK) are enriched in low complexity. Over residues 487-496 (SKSKKFGFFS) the composition is skewed to basic residues.

This sequence belongs to the protein kinase superfamily. STE Ser/Thr protein kinase family. The cofactor is Mg(2+).

The catalysed reaction is L-seryl-[protein] + ATP = O-phospho-L-seryl-[protein] + ADP + H(+). It catalyses the reaction L-threonyl-[protein] + ATP = O-phospho-L-threonyl-[protein] + ADP + H(+). In Dictyostelium discoideum (Social amoeba), this protein is Probable serine/threonine-protein kinase DDB_G0284251.